The chain runs to 149 residues: Large ribosomal subunit protein uL15 (149 aa).

The segment at 1–58 (MKLHNLRPAKGGEVKARKRVGRGYGSGLGHNAGRGRDGQNSRSGGGVRPGFEGGQMPL) is disordered. Gly residues-rich tracts occupy residues 22 to 32 (RGYGSGLGHNA) and 43 to 53 (SGGGVRPGFEG).

It belongs to the universal ribosomal protein uL15 family. As to quaternary structure, part of the 50S ribosomal subunit.

Functionally, binds to the 23S rRNA. This chain is Large ribosomal subunit protein uL15, found in Finegoldia magna (strain ATCC 29328 / DSM 20472 / WAL 2508) (Peptostreptococcus magnus).